The following is a 201-amino-acid chain: Small ribosomal subunit protein uS4c (201 aa).

The segment at 15–43 (LGALPGLTNKRPRAGSDLRNQSRSGKKSQ) is disordered. An S4 RNA-binding domain is found at 89 to 152 (MRLDNILFRL…NSRTLIQNSL (64 aa)).

This sequence belongs to the universal ribosomal protein uS4 family. Part of the 30S ribosomal subunit. Contacts protein S5. The interaction surface between S4 and S5 is involved in control of translational fidelity.

It localises to the plastid. The protein localises to the chloroplast. In terms of biological role, one of the primary rRNA binding proteins, it binds directly to 16S rRNA where it nucleates assembly of the body of the 30S subunit. Its function is as follows. With S5 and S12 plays an important role in translational accuracy. This Panax ginseng (Korean ginseng) protein is Small ribosomal subunit protein uS4c (rps4).